Reading from the N-terminus, the 1039-residue chain is Error-prone DNA polymerase (1039 aa).

It belongs to the DNA polymerase type-C family. DnaE2 subfamily.

Its subcellular location is the cytoplasm. The enzyme catalyses DNA(n) + a 2'-deoxyribonucleoside 5'-triphosphate = DNA(n+1) + diphosphate. Functionally, DNA polymerase involved in damage-induced mutagenesis and translesion synthesis (TLS). It is not the major replicative DNA polymerase. This is Error-prone DNA polymerase from Idiomarina loihiensis (strain ATCC BAA-735 / DSM 15497 / L2-TR).